The primary structure comprises 411 residues: 2,3-bisphosphoglycerate-independent phosphoglycerate mutase (411 aa).

It belongs to the BPG-independent phosphoglycerate mutase family. A-PGAM subfamily.

The enzyme catalyses (2R)-2-phosphoglycerate = (2R)-3-phosphoglycerate. It participates in carbohydrate degradation; glycolysis; pyruvate from D-glyceraldehyde 3-phosphate: step 3/5. Catalyzes the interconversion of 2-phosphoglycerate and 3-phosphoglycerate. The protein is 2,3-bisphosphoglycerate-independent phosphoglycerate mutase of Pyrobaculum arsenaticum (strain DSM 13514 / JCM 11321 / PZ6).